A 155-amino-acid polypeptide reads, in one-letter code: Ribosomal RNA large subunit methyltransferase H (155 aa).

Residues L72, G103, and 122–127 (LGRMVW) contribute to the S-adenosyl-L-methionine site.

The protein belongs to the RNA methyltransferase RlmH family. Homodimer.

The protein resides in the cytoplasm. The enzyme catalyses pseudouridine(1915) in 23S rRNA + S-adenosyl-L-methionine = N(3)-methylpseudouridine(1915) in 23S rRNA + S-adenosyl-L-homocysteine + H(+). Its function is as follows. Specifically methylates the pseudouridine at position 1915 (m3Psi1915) in 23S rRNA. The chain is Ribosomal RNA large subunit methyltransferase H from Cereibacter sphaeroides (strain ATCC 17029 / ATH 2.4.9) (Rhodobacter sphaeroides).